The chain runs to 453 residues: Allantoinase (453 aa).

Zn(2+)-binding residues include H59, H61, K146, H186, H242, and D315. N6-carboxylysine is present on K146.

Belongs to the metallo-dependent hydrolases superfamily. Allantoinase family. In terms of assembly, homotetramer. Zn(2+) is required as a cofactor. Post-translationally, carboxylation allows a single lysine to coordinate two zinc ions.

The catalysed reaction is (S)-allantoin + H2O = allantoate + H(+). It participates in nitrogen metabolism; (S)-allantoin degradation; allantoate from (S)-allantoin: step 1/1. Its function is as follows. Catalyzes the conversion of allantoin (5-ureidohydantoin) to allantoic acid by hydrolytic cleavage of the five-member hydantoin ring. The polypeptide is Allantoinase (Salmonella choleraesuis (strain SC-B67)).